A 558-amino-acid polypeptide reads, in one-letter code: Arginine--tRNA ligase (558 aa).

Positions 116–126 match the 'HIGH' region motif; the sequence is ANPNGPLHVGH.

The protein belongs to the class-I aminoacyl-tRNA synthetase family.

Its subcellular location is the cytoplasm. It carries out the reaction tRNA(Arg) + L-arginine + ATP = L-arginyl-tRNA(Arg) + AMP + diphosphate. This is Arginine--tRNA ligase from Methanocorpusculum labreanum (strain ATCC 43576 / DSM 4855 / Z).